The primary structure comprises 878 residues: Alanine--tRNA ligase (878 aa).

4 residues coordinate Zn(2+): His571, His575, Cys673, and His677.

This sequence belongs to the class-II aminoacyl-tRNA synthetase family. Requires Zn(2+) as cofactor.

Its subcellular location is the cytoplasm. The catalysed reaction is tRNA(Ala) + L-alanine + ATP = L-alanyl-tRNA(Ala) + AMP + diphosphate. Its function is as follows. Catalyzes the attachment of alanine to tRNA(Ala) in a two-step reaction: alanine is first activated by ATP to form Ala-AMP and then transferred to the acceptor end of tRNA(Ala). Also edits incorrectly charged Ser-tRNA(Ala) and Gly-tRNA(Ala) via its editing domain. The chain is Alanine--tRNA ligase from Syntrophus aciditrophicus (strain SB).